Here is a 298-residue protein sequence, read N- to C-terminus: tRNA pseudouridine synthase A (298 aa).

The active-site Nucleophile is the D56. Y125 contributes to the substrate binding site.

Belongs to the tRNA pseudouridine synthase TruA family. As to quaternary structure, homodimer.

It catalyses the reaction uridine(38/39/40) in tRNA = pseudouridine(38/39/40) in tRNA. Formation of pseudouridine at positions 38, 39 and 40 in the anticodon stem and loop of transfer RNAs. The chain is tRNA pseudouridine synthase A from Bifidobacterium animalis subsp. lactis (strain AD011).